A 258-amino-acid chain; its full sequence is Small ribosomal subunit protein mS40 (258 aa).

The transit peptide at 1–35 directs the protein to the mitochondrion; that stretch reads MAASILNVLLRRLPGVSPFRGAYGVQVLLQTLCTK. Ser49 carries the post-translational modification Phosphoserine. Residues 223–258 are disordered; that stretch reads RLREESGPPPELMPEVPLTAPAEASSTEPGAPQSAL.

The protein belongs to the bacterial ribosomal protein bS18 family. Mitochondrion-specific ribosomal protein mS40 subfamily. As to quaternary structure, component of the mitochondrial ribosome small subunit (28S) which comprises a 12S rRNA and about 30 distinct proteins.

Its subcellular location is the mitochondrion. The chain is Small ribosomal subunit protein mS40 (MRPS18B) from Sus scrofa (Pig).